We begin with the raw amino-acid sequence, 89 residues long: Exodeoxyribonuclease 7 small subunit (89 aa).

The interval 1–22 (MRKKSSSNKEETALHPPPENFE) is disordered.

The protein belongs to the XseB family. Heterooligomer composed of large and small subunits.

It localises to the cytoplasm. It carries out the reaction Exonucleolytic cleavage in either 5'- to 3'- or 3'- to 5'-direction to yield nucleoside 5'-phosphates.. Its function is as follows. Bidirectionally degrades single-stranded DNA into large acid-insoluble oligonucleotides, which are then degraded further into small acid-soluble oligonucleotides. The polypeptide is Exodeoxyribonuclease 7 small subunit (Nitrosomonas europaea (strain ATCC 19718 / CIP 103999 / KCTC 2705 / NBRC 14298)).